A 436-amino-acid chain; its full sequence is Cyclin-A2-2 (436 aa).

This sequence belongs to the cyclin family. Cyclin AB subfamily. As to expression, expressed in roots, stems, leaves, flowers and siliques.

The sequence is that of Cyclin-A2-2 (CYCA2-2) from Arabidopsis thaliana (Mouse-ear cress).